Consider the following 396-residue polypeptide: NADH-quinone oxidoreductase subunit D (396 aa).

The protein belongs to the complex I 49 kDa subunit family. NDH-1 is composed of 14 different subunits. Subunits NuoB, C, D, E, F, and G constitute the peripheral sector of the complex.

Its subcellular location is the cell inner membrane. It catalyses the reaction a quinone + NADH + 5 H(+)(in) = a quinol + NAD(+) + 4 H(+)(out). Its function is as follows. NDH-1 shuttles electrons from NADH, via FMN and iron-sulfur (Fe-S) centers, to quinones in the respiratory chain. The immediate electron acceptor for the enzyme in this species is believed to be ubiquinone. Couples the redox reaction to proton translocation (for every two electrons transferred, four hydrogen ions are translocated across the cytoplasmic membrane), and thus conserves the redox energy in a proton gradient. The polypeptide is NADH-quinone oxidoreductase subunit D (Brucella anthropi (strain ATCC 49188 / DSM 6882 / CCUG 24695 / JCM 21032 / LMG 3331 / NBRC 15819 / NCTC 12168 / Alc 37) (Ochrobactrum anthropi)).